Reading from the N-terminus, the 671-residue chain is MSEFQLVTRFQPAGDQPEAIRQLVEGIEAGLSHQTLLGVTGSGKTFSIANVIQQVQRPTLVLAPNKTLAAQLYGEFKAFFPNNAVEYFVSYYDYYQPEAYVPSSDTFIEKDASINDHIEQMRLSATKALLERRDAIIVTTVSCIYGLGSPETYLKMVLHVDRGDKLDQRALLRRLADLQYTRNEMDFARATFRVRGDVIDIFPAESDLEAIRIELFDDEVENIAAFDPLTGEVFRKLPRFTFYPKSHYVTPRETLLEAVEGIKEELKERLEYLHKANKLVEAQRLEQRTRFDLEMILELGYCNGIENYSRYLSGRPAGAPPPTLYDYLPPDALLVIDESHVSVPQVGAMYKGDRSRKETLVEYGFRMPSALDNRPMRFDEWEDVSPQTIFVSATPGPYEAEHAGRVVEQVVRPTGLVDPQVEVRPALTQVDDLLSEIRKRVAAGERVLATTLTKRMAEDLSDYLADHDVRVRYLHSDIDTVERVEIIRDLRLGTFDVLVGINLLREGLDMPEVSLVAILDADKEGFLRSERSLIQTIGRAARNLNGRAILYADNVTGSMQRAIDETERRREKQIAFNEANGIVPKGVVKDITDIMEGATVPGARSKKRKGMAKAAEESARYEAELRTPGEITKRIKQLEEKMMQFARDLEFEAAAQLRDEIAQLRERLISS.

One can recognise a Helicase ATP-binding domain in the interval 25-412; it reads EGIEAGLSHQ…AGRVVEQVVR (388 aa). 38-45 is an ATP binding site; it reads GVTGSGKT. The short motif at 91 to 114 is the Beta-hairpin element; it reads YYDYYQPEAYVPSSDTFIEKDASI. The region spanning 429 to 582 is the Helicase C-terminal domain; it reads QVDDLLSEIR…QIAFNEANGI (154 aa). The 36-residue stretch at 632-667 folds into the UVR domain; it reads TKRIKQLEEKMMQFARDLEFEAAAQLRDEIAQLRER.

Belongs to the UvrB family. In terms of assembly, forms a heterotetramer with UvrA during the search for lesions. Interacts with UvrC in an incision complex.

The protein localises to the cytoplasm. In terms of biological role, the UvrABC repair system catalyzes the recognition and processing of DNA lesions. A damage recognition complex composed of 2 UvrA and 2 UvrB subunits scans DNA for abnormalities. Upon binding of the UvrA(2)B(2) complex to a putative damaged site, the DNA wraps around one UvrB monomer. DNA wrap is dependent on ATP binding by UvrB and probably causes local melting of the DNA helix, facilitating insertion of UvrB beta-hairpin between the DNA strands. Then UvrB probes one DNA strand for the presence of a lesion. If a lesion is found the UvrA subunits dissociate and the UvrB-DNA preincision complex is formed. This complex is subsequently bound by UvrC and the second UvrB is released. If no lesion is found, the DNA wraps around the other UvrB subunit that will check the other stand for damage. The protein is UvrABC system protein B of Pseudomonas putida (strain ATCC 47054 / DSM 6125 / CFBP 8728 / NCIMB 11950 / KT2440).